Consider the following 156-residue polypeptide: MIQSQINRNIRLDLADAILLSKAKKDLSFAEIADGTGLAEAFVTAALLGQQALPADAARLVGAKLDLDEDAILLLQMIPLRGCIDDRIPTDPTMHRFYEMLQVYGTTLKALVHEKFGDGIISAINFKLDVKKVADPEGGERAVITLDGKYLPTKPF.

Active-site residues include Arg96, Glu99, and Ser122.

The protein belongs to the cyanase family.

The catalysed reaction is cyanate + hydrogencarbonate + 3 H(+) = NH4(+) + 2 CO2. Its function is as follows. Catalyzes the reaction of cyanate with bicarbonate to produce ammonia and carbon dioxide. The polypeptide is Cyanate hydratase (Escherichia coli O9:H4 (strain HS)).